Consider the following 580-residue polypeptide: MRLRWKFLFHFFGQMLIVILLLTVMLVASFFYLDARFSDAESNSGLTKATTDTLEAYLDVNEDGTWEVDNFLKKSVDKQHGWMQIIDSEGNTDYSYGVPKDVPGTYTKKELLSIYKTKKLHNYKLNYWAINIEDKSYLLLSGWKSKSEQLLTSVEKREQKIDSLAHYKSSTIDYIKRKKGAIYLLDSNGKILDSINSTKSERKTMNQLELLKYSSKPWNYKREISVKILNKDRWMVATVPNPVYVTDQEFNKSFLKVVLKAMFLVMAVLFMYIIWMTVWYMFRFGLPIFHTIRWLVNLSKGKLEEPRNREGRPVSKNKKGKIKQPYRFFGEIFESMDQLTETLRRDKRNREKIQATREEWIAGLSHDLKTPLSSIYGYSMMLESKQYDWSPEEVKEMGQVVREKSEYMSKLIEDLNLTYRLKNDALPIERKLTSLIPFFKNVIEDFKKNPFSEGYDISFVSKEEHIEFALDEAWFRRILENLLGNAVKHNGKGTEIQVILEQTKNHISLKVKDNGKGMDEETITHLFNRYYRGTNTKDSTAGTGLGLAIAKELVHLHNGTIHVNSRTNIGTVITILFKKQ.

The Cytoplasmic portion of the chain corresponds to 1–6 (MRLRWK). The chain crosses the membrane as a helical span at residues 7-27 (FLFHFFGQMLIVILLLTVMLV). Residues 28–261 (ASFFYLDARF…KSFLKVVLKA (234 aa)) are Extracellular-facing. A helical transmembrane segment spans residues 262-282 (MFLVMAVLFMYIIWMTVWYMF). Topologically, residues 283-580 (RFGLPIFHTI…TVITILFKKQ (298 aa)) are cytoplasmic. The Histidine kinase domain maps to 363-580 (GLSHDLKTPL…TVITILFKKQ (218 aa)). Phosphohistidine; by autocatalysis is present on histidine 366.

The protein resides in the cell membrane. The enzyme catalyses ATP + protein L-histidine = ADP + protein N-phospho-L-histidine.. Member of the two-component regulatory system YvrG/YvrH that positively regulates 7 transcriptional units (wprA, wapA-yxxG, dltABCDE, sunA, sunT-bdbA-yolJ-bdbB, sigO-rsoA, and sigX-rsiX), and negatively regulates the lytABC operon. Probably activates YvrH by phosphorylation. The chain is Sensor histidine kinase YvrG (yvrG) from Bacillus subtilis (strain 168).